A 99-amino-acid chain; its full sequence is Transmembrane protein 14A (99 aa).

3 helical membrane-spanning segments follow: residues 1–21 (MDLI…LGYK), 24–44 (GGVP…YGAY), and 79–99 (PAGL…LLLL).

This sequence belongs to the TMEM14 family.

The protein resides in the mitochondrion membrane. It is found in the endoplasmic reticulum membrane. In terms of biological role, inhibits apoptosis via negative regulation of the mitochondrial outer membrane permeabilization involved in apoptotic signaling pathway. This is Transmembrane protein 14A (Tmem14a) from Mus musculus (Mouse).